A 366-amino-acid polypeptide reads, in one-letter code: Terpene cyclase-like protein flvF (366 aa).

It belongs to the terpene synthase family. Homodimer.

It catalyses the reaction N,N-dimethyl-cadaverine + 2,6,9-trimethyl-13-oxatetracyclo[6.3.1.1(6,9).0(1,5)]tridecane carbocation = pre-flavunoidine + H(+). Its pathway is secondary metabolite biosynthesis; terpenoid biosynthesis. Its function is as follows. Terpene cyclase-like protein; part of the gene cluster that mediates the biosynthesis of flavunoidine, an alkaloidal terpenoid with a tetracyclic cage-like core connected to dimethylcadaverine via a C-N bond and acylated with 5,5-dimethyl-L-pipecolate. The tetracyclic core is synthesized by the terpene cyclase flvE and the cytochrome P450 monooxygenase flvD. The terpene cyclase flvE catalyzes the cyclization of farnesyl pyrophosphate (FPP) to form (1R,4R,5S)-(+)-acoradiene and the cytochrome P450 monooxygenase flvD is then responsible for oxidative conversion of (1R,4R,5S)-(+)-acoradiene into the tetracyclic cage present in the final product flavunoidine. In parallel, the N-methyltransferase flvH dimethylates L-lysine to give N,N-dimethyl-L-Lysin which is decarboxylated by flvG to afford dimethylcadaverine. The terpene cyclase-like protein flvF is the enzyme that attaches the dimethylcadaverine precusor at the C-7 of the tetracyclic cage to yield pre-flavunoidine. The cytochrome monooxygenase flvC hydroxylates the C-10 position of pre-flavunoidine whereas the NRPS flvI acylates the terpenoid core at the hydroxylated C-10 with dimethylpipecolate to yield final flavunoidine. The bifunctional enzyme flvA and the dehydrogenase flvB are responsible for the synthesis of the dimethylpipecolate precursor. The PLP-dependent lyase domain of flvA might use L-O-acetyl-homoserine and alpha-keto-isovalerate to form an intermediary ketone that can cyclize intramolecularly to yield an imine. The imine can be reduced by flvB to yield the 6-carboxylated pipecolate. The C-terminal alpha-KG-dependent oxygenase domain of flvA is then proposed to catalyze the decarboxylation to yield dimethylpipecolate. The sequence is that of Terpene cyclase-like protein flvF from Aspergillus flavus (strain ATCC 200026 / FGSC A1120 / IAM 13836 / NRRL 3357 / JCM 12722 / SRRC 167).